Reading from the N-terminus, the 387-residue chain is Patatin-11 (387 aa).

The first 23 residues, 1 to 23 (MATTKSVLVLIFMILATTSSTFA), serve as a signal peptide directing secretion. The region spanning 32–230 (LSTDGGGIKG…TVGDPALLSL (199 aa)) is the PNPLA domain. The GXGXXG signature appears at 36–41 (GGGIKG). The GXSXG signature appears at 75–79 (GTSTG). Serine 77 functions as the Nucleophile in the catalytic mechanism. A glycan (N-linked (GlcNAc...) asparagine) is linked at asparagine 115. The Proton acceptor role is filled by aspartate 216. The DGA/G motif lies at 216-218 (DGG). Residues 322 to 385 (ENALNGTTTE…DRKKLRANKA (64 aa)) are a coiled coil. Asparagine 326 carries N-linked (GlcNAc...) asparagine glycosylation.

Belongs to the patatin family. As to expression, tuber.

The protein localises to the vacuole. Its function is as follows. Probable lipolytic acyl hydrolase (LAH), an activity which is thought to be involved in the response of tubers to pathogens. This chain is Patatin-11, found in Solanum tuberosum (Potato).